Consider the following 505-residue polypeptide: Metalloprotease TIKI1 (505 aa).

A signal peptide spans 1–19 (MSPWSWFLLQTLCLLPTGA). At 20 to 477 (ASRRGAPGTA…RRGHSHHSQM (458 aa)) the chain is on the extracellular side. Residues N220, N229, N278, and N336 are each glycosylated (N-linked (GlcNAc...) asparagine). The interval 389-428 (PEAVSSGHSTLPPLVSRPGSADTPSEAEQRFRKKRRRSQR) is disordered. The segment covering 419–428 (FRKKRRRSQR) has biased composition (basic residues). Residues 478–498 (VASSACLSLWTPVFWVLVLAF) form a helical membrane-spanning segment. Residues 499-505 (QTETPLL) lie on the Cytoplasmic side of the membrane.

Belongs to the TIKI family. Mn(2+) is required as a cofactor. Co(2+) serves as cofactor.

It localises to the cell membrane. Functionally, metalloprotease that acts as a negative regulator of the Wnt signaling pathway by mediating the cleavage of the 8 N-terminal residues of a subset of Wnt proteins. Following cleavage, Wnt proteins become oxidized and form large disulfide-bond oligomers, leading to their inactivation. Able to cleave WNT3A, WNT5, but not WNT11. Required for head formation. The sequence is that of Metalloprotease TIKI1 (TRABD2A) from Homo sapiens (Human).